Here is a 275-residue protein sequence, read N- to C-terminus: NAD(P)H dehydrogenase [quinone] 1 (275 aa).

FAD-binding positions include histidine 13, 19–20 (FN), and glutamine 68. At serine 83 the chain carries Phosphoserine. An FAD-binding site is contributed by 105–108 (LQWF). Position 127–129 (127–129 (AYT)) interacts with substrate. FAD is bound by residues 149 to 152 (TTGG), tyrosine 157, and arginine 202. Residues 226–275 (PSSLFDLNFQAGFLLKKEIEDEQKNNKYGLSVGHHLGKPIPTDNQIKARK) are important for apoenzyme conformational stability. Lysine 252 participates in a covalent cross-link: Glycyl lysine isopeptide (Lys-Gly) (interchain with G-Cter in SUMO2).

It belongs to the NAD(P)H dehydrogenase (quinone) family. As to quaternary structure, homodimer. Interacts with PDLIM4 isoform 2; this interaction stabilizes PDLIM4 isoform 2 in response to oxidative stress and protects it from ubiquitin-independent degradation by the core 20S proteasome. Interacts with TP73 (via SAM domain); this interaction is NADH-dependent, stabilizes TP73 in response to oxidative stress and protects it from ubiquitin-independent degradation by the 20S proteasome. Interacts with TP53; this interaction is NADH-dependent, stabilizes TP53 in response to oxidative stress and protects it from ubiquitin-independent degradation by the 20S proteasome. FAD serves as cofactor.

The protein localises to the cytoplasm. The protein resides in the cytosol. It carries out the reaction a quinone + NADH + H(+) = a quinol + NAD(+). The catalysed reaction is a quinone + NADPH + H(+) = a quinol + NADP(+). The enzyme catalyses ubiquinone-10 + NADH + H(+) = ubiquinol-10 + NAD(+). It catalyses the reaction menadione + NADH + H(+) = menadiol + NAD(+). Flavin-containing quinone reductase that catalyzes two-electron reduction of quinones to hydroquinones using either NADH or NADPH as electron donors. In a ping-pong kinetic mechanism, the electrons are sequentially transferred from NAD(P)H to flavin cofactor and then from reduced flavin to the quinone, bypassing the formation of semiquinone and reactive oxygen species. Regulates cellular redox state primarily through quinone detoxification. Reduces components of plasma membrane redox system such as coenzyme Q and vitamin quinones, producing antioxidant hydroquinone forms. In the process may function as superoxide scavenger to prevent hydroquinone oxidation and facilitate excretion. Alternatively, can activate quinones and their derivatives by generating redox reactive hydroquinones with DNA cross-linking antitumor potential. Acts as a gatekeeper of the core 20S proteasome known to degrade proteins with unstructured regions. Upon oxidative stress, interacts with tumor suppressors TP53 and TP73 in a NADH-dependent way and inhibits their ubiquitin-independent degradation by the 20S proteasome. In Cavia porcellus (Guinea pig), this protein is NAD(P)H dehydrogenase [quinone] 1 (NQO1).